The sequence spans 245 residues: Extracellular protein ARB_04177 (245 aa).

The protein resides in the secreted. The chain is Extracellular protein ARB_04177 from Arthroderma benhamiae (strain ATCC MYA-4681 / CBS 112371) (Trichophyton mentagrophytes).